The following is a 70-amino-acid chain: Fumarase D (70 aa).

This sequence belongs to the FumD family.

The enzyme catalyses (S)-malate = fumarate + H2O. In vitro catalyzes the addition of water to fumarate, forming malate. Cannot catalyze the reverse reaction. Cannot use the cis-isomer maleate as substrate. The sequence is that of Fumarase D from Salmonella typhi.